Reading from the N-terminus, the 435-residue chain is Tyrosine-protein phosphatase non-receptor type 1 (435 aa).

An N-acetylmethionine modification is found at M1. Residues 3–277 form the Tyrosine-protein phosphatase domain; it reads MEKEFEQIDK…RFSYLAVIEG (275 aa). Y20 is subject to Phosphotyrosine. S50 is modified (phosphoserine; by PKB/AKT1, CLK1 and CLK2). The residue at position 66 (Y66) is a Phosphotyrosine; by EGFR. Residues D181 and 215–221 each bind substrate; that span reads CSAGIGR. C215 acts as the Phosphocysteine intermediate in catalysis. C215 bears the Cysteine persulfide; alternate mark. C215 carries the cysteine sulfenic acid (-SOH); alternate modification. The residue at position 215 (C215) is a Cysteine sulfinic acid (-SO2H); alternate. C215 carries the post-translational modification S-nitrosocysteine; in reversibly inhibited form. The n,N-(cysteine-1,S-diyl)serine (Cys-Ser); in inhibited form cross-link spans 215–216; it reads CS. S242 and S243 each carry phosphoserine; by CLK1 and CLK2. Substrate is bound at residue Q262. Positions 338–351 are enriched in basic and acidic residues; that stretch reads TQEDKDCPIKEEKG. Residues 338-359 are disordered; it reads TQEDKDCPIKEEKGSPLNAAPY. S352, S363, and S365 each carry phosphoserine. T368 is subject to Phosphothreonine. The residue at position 378 (S378) is a Phosphoserine; by PKC. Residues 378–398 form a disordered region; sequence SLRGAQAASPAKGEPSLPEKD. At S386 the chain carries Phosphoserine; by CDK1.

Belongs to the protein-tyrosine phosphatase family. Non-receptor class 1 subfamily. As to quaternary structure, interacts with EPHA3 (phosphorylated); dephosphorylates EPHA3 and may regulate its trafficking and function. Interacts with MET. Interacts with NCK1. Oxidized on Cys-215; the Cys-SOH formed in response to redox signaling reacts with the alpha-amido of the following residue to form a sulfenamide cross-link, triggering a conformational change that inhibits substrate binding and activity. The active site can be restored by reduction. Post-translationally, ser-50 is the major site of phosphorylation as compared to Ser-242 and Ser-243. Activated by phosphorylation at Ser-50. In terms of processing, S-nitrosylation of Cys-215 inactivates the enzyme activity. Sulfhydration at Cys-215 following endoplasmic reticulum stress inactivates the enzyme activity, promoting EIF2AK3/PERK activity. As to expression, expressed in keratinocytes (at protein level).

The protein resides in the endoplasmic reticulum membrane. The enzyme catalyses O-phospho-L-tyrosyl-[protein] + H2O = L-tyrosyl-[protein] + phosphate. Its function is as follows. Tyrosine-protein phosphatase which acts as a regulator of endoplasmic reticulum unfolded protein response. Mediates dephosphorylation of EIF2AK3/PERK; inactivating the protein kinase activity of EIF2AK3/PERK. May play an important role in CKII- and p60c-src-induced signal transduction cascades. May regulate the EFNA5-EPHA3 signaling pathway which modulates cell reorganization and cell-cell repulsion. May also regulate the hepatocyte growth factor receptor signaling pathway through dephosphorylation of MET. In Homo sapiens (Human), this protein is Tyrosine-protein phosphatase non-receptor type 1 (PTPN1).